The sequence spans 472 residues: Ribosomal protein uS12 methylthiotransferase RimO (472 aa).

One can recognise an MTTase N-terminal domain in the interval 33–143 (NRIGFVSLGC…VLKHVHKYVP (111 aa)). [4Fe-4S] cluster is bound by residues cysteine 42, cysteine 78, cysteine 107, cysteine 175, cysteine 179, and cysteine 182. One can recognise a Radical SAM core domain in the interval 161 to 398 (LTPKHYAYLK…MEVQAEISAE (238 aa)). In terms of domain architecture, TRAM spans 401–467 (ARFVGRTLDI…EHDLWAEVVD (67 aa)).

The protein belongs to the methylthiotransferase family. RimO subfamily. It depends on [4Fe-4S] cluster as a cofactor.

The protein resides in the cytoplasm. The catalysed reaction is L-aspartate(89)-[ribosomal protein uS12]-hydrogen + (sulfur carrier)-SH + AH2 + 2 S-adenosyl-L-methionine = 3-methylsulfanyl-L-aspartate(89)-[ribosomal protein uS12]-hydrogen + (sulfur carrier)-H + 5'-deoxyadenosine + L-methionine + A + S-adenosyl-L-homocysteine + 2 H(+). Functionally, catalyzes the methylthiolation of an aspartic acid residue of ribosomal protein uS12. This is Ribosomal protein uS12 methylthiotransferase RimO from Shewanella baltica (strain OS155 / ATCC BAA-1091).